Here is a 51-residue protein sequence, read N- to C-terminus: Large ribosomal subunit protein bL33 (51 aa).

Belongs to the bacterial ribosomal protein bL33 family.

This Alteromonas mediterranea (strain DSM 17117 / CIP 110805 / LMG 28347 / Deep ecotype) protein is Large ribosomal subunit protein bL33.